We begin with the raw amino-acid sequence, 249 residues long: MESIVVSNWKMHFSFSEACNYLNLITSLNSNLNLAKMIFAVPNLYLSGLKLKFNDTYHFSAQDVSMITESSGPYTGEISASMLKNLNVNYAIVGHSERRLLFYEDANTIALKVRNCINNAIVPIVCIGEPIEARKNKTYLQYLAQQLSSISFSFTKNVIIAYEPIWSIGSDMIPTIDDIYEVVTMIREIQNRYIPHNIENSVKIVYGGSVSANNIHQILTAGVDGVLIGKASLKLESLTTIIKTVQGLD.

8 to 10 (NWK) contacts substrate. Histidine 95 serves as the catalytic Electrophile. Glutamate 163 (proton acceptor) is an active-site residue. Residues glycine 169 and serine 209 each contribute to the substrate site.

The protein belongs to the triosephosphate isomerase family. As to quaternary structure, homodimer.

It is found in the cytoplasm. It carries out the reaction D-glyceraldehyde 3-phosphate = dihydroxyacetone phosphate. Its pathway is carbohydrate biosynthesis; gluconeogenesis. It participates in carbohydrate degradation; glycolysis; D-glyceraldehyde 3-phosphate from glycerone phosphate: step 1/1. In terms of biological role, involved in the gluconeogenesis. Catalyzes stereospecifically the conversion of dihydroxyacetone phosphate (DHAP) to D-glyceraldehyde-3-phosphate (G3P). This chain is Triosephosphate isomerase, found in Orientia tsutsugamushi (strain Ikeda) (Rickettsia tsutsugamushi).